Here is a 158-residue protein sequence, read N- to C-terminus: 2-C-methyl-D-erythritol 2,4-cyclodiphosphate synthase (158 aa).

Residues aspartate 9 and histidine 11 each contribute to the a divalent metal cation site. 4-CDP-2-C-methyl-D-erythritol 2-phosphate contacts are provided by residues 9–11 (DVH) and 35–36 (HS). Position 43 (histidine 43) interacts with a divalent metal cation. 4-CDP-2-C-methyl-D-erythritol 2-phosphate is bound by residues 57-59 (DIG), 62-66 (FPDTD), 133-136 (TTTE), phenylalanine 140, and arginine 143.

The protein belongs to the IspF family. Homotrimer. A divalent metal cation is required as a cofactor.

The catalysed reaction is 4-CDP-2-C-methyl-D-erythritol 2-phosphate = 2-C-methyl-D-erythritol 2,4-cyclic diphosphate + CMP. The protein operates within isoprenoid biosynthesis; isopentenyl diphosphate biosynthesis via DXP pathway; isopentenyl diphosphate from 1-deoxy-D-xylulose 5-phosphate: step 4/6. Involved in the biosynthesis of isopentenyl diphosphate (IPP) and dimethylallyl diphosphate (DMAPP), two major building blocks of isoprenoid compounds. Catalyzes the conversion of 4-diphosphocytidyl-2-C-methyl-D-erythritol 2-phosphate (CDP-ME2P) to 2-C-methyl-D-erythritol 2,4-cyclodiphosphate (ME-CPP) with a corresponding release of cytidine 5-monophosphate (CMP). The polypeptide is 2-C-methyl-D-erythritol 2,4-cyclodiphosphate synthase (Haemophilus influenzae (strain 86-028NP)).